Here is a 458-residue protein sequence, read N- to C-terminus: Protochlorophyllide reductase, chloroplastic (458 aa).

It belongs to the short-chain dehydrogenases/reductases (SDR) family. POR subfamily.

The protein resides in the plastid. It is found in the chloroplast. It catalyses the reaction chlorophyllide a + NADP(+) = protochlorophyllide a + NADPH + H(+). It participates in porphyrin-containing compound metabolism; chlorophyll biosynthesis. Phototransformation of protochlorophyllide (Pchlide) to chlorophyllide (Chlide). This chain is Protochlorophyllide reductase, chloroplastic (PORA), found in Marchantia paleacea (Liverwort).